Here is a 295-residue protein sequence, read N- to C-terminus: Ribosomal RNA small subunit methyltransferase A (295 aa).

Residues Asn-31, Leu-33, Gly-58, Glu-79, Asp-104, and Asn-129 each contribute to the S-adenosyl-L-methionine site.

The protein belongs to the class I-like SAM-binding methyltransferase superfamily. rRNA adenine N(6)-methyltransferase family. RsmA subfamily.

The protein localises to the cytoplasm. The enzyme catalyses adenosine(1518)/adenosine(1519) in 16S rRNA + 4 S-adenosyl-L-methionine = N(6)-dimethyladenosine(1518)/N(6)-dimethyladenosine(1519) in 16S rRNA + 4 S-adenosyl-L-homocysteine + 4 H(+). In terms of biological role, specifically dimethylates two adjacent adenosines (A1518 and A1519) in the loop of a conserved hairpin near the 3'-end of 16S rRNA in the 30S particle. May play a critical role in biogenesis of 30S subunits. This chain is Ribosomal RNA small subunit methyltransferase A, found in Enterococcus faecalis (strain ATCC 700802 / V583).